The sequence spans 128 residues: Large ribosomal subunit protein bL19 (128 aa).

It belongs to the bacterial ribosomal protein bL19 family.

Its function is as follows. This protein is located at the 30S-50S ribosomal subunit interface and may play a role in the structure and function of the aminoacyl-tRNA binding site. The protein is Large ribosomal subunit protein bL19 of Janthinobacterium sp. (strain Marseille) (Minibacterium massiliensis).